A 280-amino-acid polypeptide reads, in one-letter code: Ribosomal RNA small subunit methyltransferase A (280 aa).

Histidine 15, leucine 17, glycine 42, glutamate 64, aspartate 89, and asparagine 109 together coordinate S-adenosyl-L-methionine.

Belongs to the class I-like SAM-binding methyltransferase superfamily. rRNA adenine N(6)-methyltransferase family. RsmA subfamily.

It is found in the cytoplasm. It catalyses the reaction adenosine(1518)/adenosine(1519) in 16S rRNA + 4 S-adenosyl-L-methionine = N(6)-dimethyladenosine(1518)/N(6)-dimethyladenosine(1519) in 16S rRNA + 4 S-adenosyl-L-homocysteine + 4 H(+). Functionally, specifically dimethylates two adjacent adenosines (A1518 and A1519) in the loop of a conserved hairpin near the 3'-end of 16S rRNA in the 30S particle. May play a critical role in biogenesis of 30S subunits. In Synechococcus sp. (strain WH7803), this protein is Ribosomal RNA small subunit methyltransferase A.